Here is a 214-residue protein sequence, read N- to C-terminus: MIIVLLGPPGAGKGTQGERLAARLDVPKIATGDVLRAAVKEGTPLGLEAKAAMDRGDLVPDAVIMGIMKEALAAPSAAKGAILDGVVRTTPQAAGLNDMLVALGRPLDAVLLFEVDEDELVRRLSGRTTCEACQRPFFGRQPGETCTEGGVSGTLVRRKDDEPEAIRKRMEVYREQTSPVIHWYEKSGANLVRVDAIGTLEEVEGRVLSALRIS.

An ATP-binding site is contributed by 10–15 (GAGKGT). The NMP stretch occupies residues 30 to 59 (ATGDVLRAAVKEGTPLGLEAKAAMDRGDLV). AMP-binding positions include Thr-31, Arg-36, 57 to 59 (DLV), and Gln-92. The LID stretch occupies residues 126–161 (GRTTCEACQRPFFGRQPGETCTEGGVSGTLVRRKDD). Arg-127 is a binding site for ATP. Positions 158 and 169 each coordinate AMP. An ATP-binding site is contributed by Gly-198.

Belongs to the adenylate kinase family. In terms of assembly, monomer.

The protein localises to the cytoplasm. The catalysed reaction is AMP + ATP = 2 ADP. Its pathway is purine metabolism; AMP biosynthesis via salvage pathway; AMP from ADP: step 1/1. Catalyzes the reversible transfer of the terminal phosphate group between ATP and AMP. Plays an important role in cellular energy homeostasis and in adenine nucleotide metabolism. The polypeptide is Adenylate kinase (Gemmatimonas aurantiaca (strain DSM 14586 / JCM 11422 / NBRC 100505 / T-27)).